An 818-amino-acid chain; its full sequence is Glycogen phosphorylase (818 aa).

Residue Lys667 is modified to N6-(pyridoxal phosphate)lysine.

The protein belongs to the glycogen phosphorylase family. Requires pyridoxal 5'-phosphate as cofactor.

The enzyme catalyses [(1-&gt;4)-alpha-D-glucosyl](n) + phosphate = [(1-&gt;4)-alpha-D-glucosyl](n-1) + alpha-D-glucose 1-phosphate. In terms of biological role, phosphorylase is an important allosteric enzyme in carbohydrate metabolism. Enzymes from different sources differ in their regulatory mechanisms and in their natural substrates. However, all known phosphorylases share catalytic and structural properties. The protein is Glycogen phosphorylase (glgP) of Pasteurella multocida (strain Pm70).